The primary structure comprises 259 residues: Acyl-[acyl-carrier-protein]--UDP-N-acetylglucosamine O-acyltransferase (259 aa).

It belongs to the transferase hexapeptide repeat family. LpxA subfamily. In terms of assembly, homotrimer.

The protein resides in the cytoplasm. It catalyses the reaction a (3R)-hydroxyacyl-[ACP] + UDP-N-acetyl-alpha-D-glucosamine = a UDP-3-O-[(3R)-3-hydroxyacyl]-N-acetyl-alpha-D-glucosamine + holo-[ACP]. The protein operates within glycolipid biosynthesis; lipid IV(A) biosynthesis; lipid IV(A) from (3R)-3-hydroxytetradecanoyl-[acyl-carrier-protein] and UDP-N-acetyl-alpha-D-glucosamine: step 1/6. Its function is as follows. Involved in the biosynthesis of lipid A, a phosphorylated glycolipid that anchors the lipopolysaccharide to the outer membrane of the cell. This is Acyl-[acyl-carrier-protein]--UDP-N-acetylglucosamine O-acyltransferase from Akkermansia muciniphila (strain ATCC BAA-835 / DSM 22959 / JCM 33894 / BCRC 81048 / CCUG 64013 / CIP 107961 / Muc).